Reading from the N-terminus, the 190-residue chain is GTP cyclohydrolase 1 (190 aa).

The Zn(2+) site is built by Cys79, His82, and Cys151.

The protein belongs to the GTP cyclohydrolase I family. As to quaternary structure, toroid-shaped homodecamer, composed of two pentamers of five dimers.

The enzyme catalyses GTP + H2O = 7,8-dihydroneopterin 3'-triphosphate + formate + H(+). It functions in the pathway cofactor biosynthesis; 7,8-dihydroneopterin triphosphate biosynthesis; 7,8-dihydroneopterin triphosphate from GTP: step 1/1. The polypeptide is GTP cyclohydrolase 1 (Clostridioides difficile (strain 630) (Peptoclostridium difficile)).